Here is a 460-residue protein sequence, read N- to C-terminus: Nitrogenase iron-iron protein beta chain (460 aa).

The [8Fe-7S] cluster site is built by Cys20, Cys45, Cys104, and Ser143.

Belongs to the NifD/NifK/NifE/NifN family. In terms of assembly, hexamer of two alpha, two beta, and two delta chains. [8Fe-7S] cluster is required as a cofactor.

It catalyses the reaction N2 + 8 reduced [2Fe-2S]-[ferredoxin] + 16 ATP + 16 H2O = H2 + 8 oxidized [2Fe-2S]-[ferredoxin] + 2 NH4(+) + 16 ADP + 16 phosphate + 6 H(+). In terms of biological role, this iron-iron protein is part of the nitrogenase complex that catalyzes the key enzymatic reactions in nitrogen fixation. Other nitrogenase complexes utilize a molybdenum-iron protein or a vanadium-iron protein. The chain is Nitrogenase iron-iron protein beta chain (anfK) from Rhodobacter capsulatus (Rhodopseudomonas capsulata).